A 443-amino-acid polypeptide reads, in one-letter code: ATP synthase subunit b-delta (443 aa).

Positions 1–168 (MSTFIGQLIG…PSDAALDDAV (168 aa)) are ATP synthase subunit b. A helical transmembrane segment spans residues 4–24 (FIGQLIGFAVIVFLLVRFVVP). The segment at 169-443 (GSRMRSTSRE…LASAETQLPD (275 aa)) is ATP synthase subunit delta.

This sequence in the N-terminal section; belongs to the ATPase B chain family. In the C-terminal section; belongs to the ATPase delta chain family. In terms of assembly, F-type ATPases have 2 components, F(1) - the catalytic core - and F(0) - the membrane proton channel. F(1) has five subunits: alpha(3), beta(3), gamma(1), delta(1), epsilon(1). F(0) has three main subunits: a(1), b(2) and c(10-14). The alpha and beta chains form an alternating ring which encloses part of the gamma chain. F(1) is attached to F(0) by a central stalk formed by the gamma and epsilon chains, while a peripheral stalk is formed by the delta and b chains.

Its subcellular location is the cell membrane. Its function is as follows. F(1)F(0) ATP synthase produces ATP from ADP in the presence of a proton or sodium gradient. F-type ATPases consist of two structural domains, F(1) containing the extramembraneous catalytic core and F(0) containing the membrane proton channel, linked together by a central stalk and a peripheral stalk. During catalysis, ATP synthesis in the catalytic domain of F(1) is coupled via a rotary mechanism of the central stalk subunits to proton translocation. This fusion protein includes a component of the F(0) channel (subunit b) and of the F(1) subunit (subunit delta). Two copies of subunit b and one of delta together form the peripheral 'stator' stalk which links F(1) to F(0). In Mycobacterium sp. (strain JLS), this protein is ATP synthase subunit b-delta (atpFH).